The following is a 458-amino-acid chain: Morphogenetic regulator of filamentous growth protein 1 (458 aa).

Positions 401–458 are disordered; that stretch reads KKDSGSEPLHAKRRRNSGISPRTTTLGPNGNSNTSNEELPTSDVNDINKDMTKKKMKF. A compositionally biased stretch (polar residues) spans 417–445; sequence SGISPRTTTLGPNGNSNTSNEELPTSDVN. Over residues 446 to 458 the composition is skewed to basic and acidic residues; sequence DINKDMTKKKMKF.

The protein belongs to the MFG1 family. In terms of assembly, interacts with FLO8 and MSS11, both morphogenetic transcription factors binding directly to the FLO11 promoter.

Its subcellular location is the nucleus. Its function is as follows. Transcriptional regulator with a general role in all morphogenetically distinct forms of filamentous growth, namely haploid invasive growth, biofilm formation, and diploid pseudohyphal growth. May control FLO11 gene expression as part of a promoter-bound complex with FLO8 and MSS1. The sequence is that of Morphogenetic regulator of filamentous growth protein 1 (MFG1) from Saccharomyces cerevisiae (strain ATCC 204508 / S288c) (Baker's yeast).